Reading from the N-terminus, the 405-residue chain is DNA polymerase IV 1 (405 aa).

A UmuC domain is found at 23–203 (IAHIDCDAFY…RPVTTIWGVG (181 aa)). Residues aspartate 27 and aspartate 120 each coordinate Mg(2+). Residue glutamate 121 is part of the active site.

It belongs to the DNA polymerase type-Y family. Monomer. Mg(2+) serves as cofactor.

Its subcellular location is the cytoplasm. The enzyme catalyses DNA(n) + a 2'-deoxyribonucleoside 5'-triphosphate = DNA(n+1) + diphosphate. Poorly processive, error-prone DNA polymerase involved in untargeted mutagenesis. Copies undamaged DNA at stalled replication forks, which arise in vivo from mismatched or misaligned primer ends. These misaligned primers can be extended by PolIV. Exhibits no 3'-5' exonuclease (proofreading) activity. May be involved in translesional synthesis, in conjunction with the beta clamp from PolIII. The protein is DNA polymerase IV 1 (dinB1) of Agrobacterium fabrum (strain C58 / ATCC 33970) (Agrobacterium tumefaciens (strain C58)).